The primary structure comprises 1141 residues: Membrane-associated protein gex-3 (1141 aa).

It belongs to the HEM-1/HEM-2 family. Interacts with aco-1, gei-13 and gex-2. Interacts with gex-3. As to expression, expressed in neurons.

The protein localises to the cytoplasm. Rac effector required for tissue morphogenesis, cell migrations and egg laying. May play a role in egg laying and in yolk protein clatherin-mediated endocytosis by oocytes during oogenesis. Plays a role in the formation of gap junctions between EA and EP endodermal precursor cells in embryos. This Caenorhabditis elegans protein is Membrane-associated protein gex-3.